A 183-amino-acid polypeptide reads, in one-letter code: Der GTPase-activating protein YihI (183 aa).

Residues 1 to 18 (MNQPSKAPRAPRSSAATP) show a composition bias toward low complexity. The segment at 1-114 (MNQPSKAPRA…EEELAKLEND (114 aa)) is disordered. A compositionally biased stretch (basic and acidic residues) spans 25–34 (RAELDQEARE). Low complexity predominate over residues 56–65 (NQKNKAAAQA). A compositionally biased stretch (basic and acidic residues) spans 92–114 (PKAEAKPKPRLTPEEELAKLEND).

It belongs to the YihI family. Interacts with Der.

A GTPase-activating protein (GAP) that modifies Der/EngA GTPase function. May play a role in ribosome biogenesis. In Serratia proteamaculans (strain 568), this protein is Der GTPase-activating protein YihI.